We begin with the raw amino-acid sequence, 187 residues long: Peptide deformylase (187 aa).

Fe cation contacts are provided by Cys94 and His136. Glu137 is an active-site residue. Residue His140 coordinates Fe cation.

Belongs to the polypeptide deformylase family. Fe(2+) serves as cofactor.

It catalyses the reaction N-terminal N-formyl-L-methionyl-[peptide] + H2O = N-terminal L-methionyl-[peptide] + formate. Functionally, removes the formyl group from the N-terminal Met of newly synthesized proteins. Requires at least a dipeptide for an efficient rate of reaction. N-terminal L-methionine is a prerequisite for activity but the enzyme has broad specificity at other positions. The polypeptide is Peptide deformylase (Chlorobaculum parvum (strain DSM 263 / NCIMB 8327) (Chlorobium vibrioforme subsp. thiosulfatophilum)).